A 318-amino-acid polypeptide reads, in one-letter code: Small ribosomal subunit protein RACK1 (318 aa).

WD repeat units follow at residues 11-44 (GHRG…LSWG), 65-95 (GHSA…RLWN), 107-137 (GHTK…RVWN), 150-182 (AHTD…KVWD), 194-224 (GHTN…RLWD), 235-264 (AAGA…RIFD), and 282-315 (KKIV…WGVS).

Belongs to the WD repeat G protein beta family. Ribosomal protein RACK1 subfamily.

This Trypanosoma brucei brucei protein is Small ribosomal subunit protein RACK1.